The primary structure comprises 404 residues: Putative replication protein C (404 aa).

Residues 249–287 (PDQIERHKQNSHPESTNEFEPSSREEQGERPSPAIEPQR) form a disordered region.

It to A.rhizogenes possible replication protein C (RepC).

The polypeptide is Putative replication protein C (Sinorhizobium fredii (strain NBRC 101917 / NGR234)).